The primary structure comprises 286 residues: Aminoglycoside N(3)-acetyltransferase III (286 aa).

Belongs to the antibiotic N-acetyltransferase family.

It carries out the reaction a 2-deoxystreptamine antibiotic + acetyl-CoA = an N(3)-acetyl-2-deoxystreptamine antibiotic + CoA + H(+). Resistance to antibiotics containing the 2-deoxy-streptamine ring including gentamicin, kanamycin, tobramycin, neomycin and apramycin. The protein is Aminoglycoside N(3)-acetyltransferase III (aacC3) of Salmonella sp.